We begin with the raw amino-acid sequence, 611 residues long: Pyrichalasin H cluster regulator pyiR (611 aa).

The segment at residues 11 to 47 (CDRCRGHKLRCIRLDPGPNDTGALLPCKRCVKAGAEC) is a DNA-binding region (zn(2)-C6 fungal-type). Disordered stretches follow at residues 53 to 128 (LSVK…LPPW), 169 to 192 (ALAAPPGSERSPHRTSRAPSDGTT), 265 to 291 (GGAGSQSLRDQQMQQHQRHGSASGRSS), 401 to 427 (AHEGSSTENSAHRRGRGASPTADAAPQ), 521 to 550 (RGGLGGSSRDESSTEGGDGGGAGSSASDER), and 564 to 593 (SWFTTTTRGGSGGSGPGEGTGDSNGGRTVE). Residues 59-69 (GDGHHSAHRAT) show a composition bias toward basic and acidic residues. A compositionally biased stretch (low complexity) spans 98-109 (PTQPAPQRQTQR). The segment covering 265–279 (GGAGSQSLRDQQMQQ) has biased composition (polar residues). The segment covering 572–587 (GGSGGSGPGEGTGDSN) has biased composition (gly residues).

Its subcellular location is the nucleus. In terms of biological role, transcription factor that specifically regulates the expression of the gene cluster that mediates the biosynthesis of the mycotoxin pyrichalasin H, a tyrosine-derived cytochalasan that inhibits the growth of rice seedlings, but also inhibits lymphocyte capping and actin polymerization and alters cell morphology. Pyrichalasin H is indicated as the responsible agent for the genus-specific pathogenicity of M.grisea toward crabgrass. In Pyricularia grisea (Crabgrass-specific blast fungus), this protein is Pyrichalasin H cluster regulator pyiR.